Here is a 147-residue protein sequence, read N- to C-terminus: Austinoid biosynthesis cluster protein H (147 aa).

This sequence belongs to the trt14 isomerase family. Homodimer.

Its pathway is secondary metabolite biosynthesis; terpenoid biosynthesis. Functionally, part of the gene cluster that mediates the biosynthesis of calidodehydroaustin, a fungal meroterpenoid. The first step of the pathway is the synthesis of 3,5-dimethylorsellinic acid by the polyketide synthase ausA. 3,5-dimethylorsellinic acid is then prenylated by the polyprenyl transferase ausN. Further epoxidation by the FAD-dependent monooxygenase ausM and cyclization by the probable terpene cyclase ausL lead to the formation of protoaustinoid A. Protoaustinoid A is then oxidized to spiro-lactone preaustinoid A3 by the combined action of the FAD-binding monooxygenases ausB and ausC, and the dioxygenase ausE. Acid-catalyzed keto-rearrangement and ring contraction of the tetraketide portion of preaustinoid A3 by ausJ lead to the formation of preaustinoid A4. The aldo-keto reductase ausK, with the help of ausH, is involved in the next step by transforming preaustinoid A4 into isoaustinone which is in turn hydroxylated by the P450 monooxygenase ausI to form austinolide. The cytochrome P450 monooxygenase ausG modifies austinolide to austinol. Austinol is further acetylated to austin by the O-acetyltransferase ausP, which spontaneously changes to dehydroaustin. The cytochrome P450 monooxygenase ausR then converts dehydroaustin is into 7-dehydrodehydroaustin. The hydroxylation catalyzed by ausR permits the O-acetyltransferase ausQ to add an additional acetyl group to the molecule, leading to the formation of acetoxydehydroaustin. The short chain dehydrogenase ausT catalyzes the reduction of the double bond present between carbon atoms 1 and 2 to convert 7-dehydrodehydroaustin into 1,2-dihydro-7-hydroxydehydroaustin. AusQ catalyzes not only an acetylation reaction but also the addition of the PKS ausV diketide product to 1,2-dihydro-7-hydroxydehydroaustin, forming precalidodehydroaustin. Finally, the iron/alpha-ketoglutarate-dependent dioxygenase converts precalidodehydroaustin into calidodehydroaustin. The chain is Austinoid biosynthesis cluster protein H from Aspergillus calidoustus.